The following is a 322-amino-acid chain: Tyrosine recombinase XerC (322 aa).

Residues 1 to 25 (MPEAAPPVADARGSSPTATTGPGAD) are disordered. The segment covering 16–25 (PTATTGPGAD) has biased composition (low complexity). One can recognise a Core-binding (CB) domain in the interval 25 to 111 (DATLSAVEPF…ACRSYYAWLL (87 aa)). Residues 132 to 309 (KLPQVLDADE…DFQHLAKVYD (178 aa)) form the Tyr recombinase domain. Active-site residues include R171, K195, H261, R264, and H287. Y296 acts as the O-(3'-phospho-DNA)-tyrosine intermediate in catalysis.

This sequence belongs to the 'phage' integrase family. XerC subfamily. Forms a cyclic heterotetrameric complex composed of two molecules of XerC and two molecules of XerD.

Its subcellular location is the cytoplasm. Its function is as follows. Site-specific tyrosine recombinase, which acts by catalyzing the cutting and rejoining of the recombining DNA molecules. The XerC-XerD complex is essential to convert dimers of the bacterial chromosome into monomers to permit their segregation at cell division. It also contributes to the segregational stability of plasmids. This chain is Tyrosine recombinase XerC, found in Xanthomonas campestris pv. campestris (strain 8004).